The chain runs to 161 residues: Probable chemoreceptor glutamine deamidase CheD (161 aa).

Belongs to the CheD family.

It catalyses the reaction L-glutaminyl-[protein] + H2O = L-glutamyl-[protein] + NH4(+). In terms of biological role, probably deamidates glutamine residues to glutamate on methyl-accepting chemotaxis receptors (MCPs), playing an important role in chemotaxis. The protein is Probable chemoreceptor glutamine deamidase CheD of Syntrophomonas wolfei subsp. wolfei (strain DSM 2245B / Goettingen).